The following is a 421-amino-acid chain: Growth arrest-specific protein 7 (421 aa).

Positions 1-117 are disordered; it reads MATALQKPGM…SPGRKQSKEN (117 aa). A WW domain is found at 22–55; sequence VILPPGWHSYLSPQGRRYYVNTTTNETTWERPSS. Positions 41–52 are enriched in polar residues; it reads VNTTTNETTWER. Positions 53–65 are enriched in low complexity; that stretch reads PSSSPGISASPAP. 2 positions are modified to phosphoserine: serine 62 and serine 108. Positions 95-117 are enriched in polar residues; sequence RKSTGDSQNLGSSSPGRKQSKEN. The 261-residue stretch at 141-401 folds into the F-BAR domain; it reads TEWSYCDYFW…LLRKVDPAKD (261 aa). Residues 254–328 are a coiled coil; sequence ENFKKDMKKC…RKSTQAGDDL (75 aa).

In terms of tissue distribution, expressed abundantly in brain with lower levels in heart and testis. In the brain, expressed prominently in the Purkinje layer of the cerebellum, moderately in hippocampus, and less extensively in cerebral cortex and caudate putamen.

It is found in the cytoplasm. Functionally, may play a role in promoting maturation and morphological differentiation of cerebellar neurons. The protein is Growth arrest-specific protein 7 (Gas7) of Mus musculus (Mouse).